Here is a 265-residue protein sequence, read N- to C-terminus: uncharacterized protein (265 aa).

Residues histidine 7, histidine 9, glutamate 94, histidine 130, histidine 155, and aspartate 205 each coordinate a divalent metal cation.

Belongs to the metallo-dependent hydrolases superfamily. TatD-type hydrolase family. A divalent metal cation is required as a cofactor.

This is an uncharacterized protein from Escherichia coli O157:H7.